The chain runs to 413 residues: Aspartate aminotransferase, cytoplasmic (413 aa).

Positions 39, 141, and 195 each coordinate L-aspartate. N6-(pyridoxal phosphate)lysine is present on K259. R387 contacts L-aspartate.

It belongs to the class-I pyridoxal-phosphate-dependent aminotransferase family. In terms of assembly, homodimer. Pyridoxal 5'-phosphate is required as a cofactor.

Its subcellular location is the cytoplasm. The catalysed reaction is L-aspartate + 2-oxoglutarate = oxaloacetate + L-glutamate. The enzyme catalyses L-cysteine + 2-oxoglutarate = 2-oxo-3-sulfanylpropanoate + L-glutamate. It catalyses the reaction (2S)-2-aminobutanoate + 2-oxoglutarate = 2-oxobutanoate + L-glutamate. It carries out the reaction 3-sulfino-L-alanine + 2-oxoglutarate = 3-sulfinopyruvate + L-glutamate. Functionally, biosynthesis of L-glutamate from L-aspartate or L-cysteine. Important regulator of levels of glutamate, the major excitatory neurotransmitter of the vertebrate central nervous system. Acts as a scavenger of glutamate in brain neuroprotection. The aspartate aminotransferase activity is involved in hepatic glucose synthesis during development and in adipocyte glyceroneogenesis. Using L-cysteine as substrate, regulates levels of mercaptopyruvate, an important source of hydrogen sulfide. Mercaptopyruvate is converted into H(2)S via the action of 3-mercaptopyruvate sulfurtransferase (3MST). Hydrogen sulfide is an important synaptic modulator and neuroprotectant in the brain. This chain is Aspartate aminotransferase, cytoplasmic, found in Bos taurus (Bovine).